Here is a 159-residue protein sequence, read N- to C-terminus: Transcription antitermination protein NusB (159 aa).

Residues 1-20 (MNKNTQGKPSGKPVRRDGVD) are disordered.

It belongs to the NusB family.

Its function is as follows. Involved in transcription antitermination. Required for transcription of ribosomal RNA (rRNA) genes. Binds specifically to the boxA antiterminator sequence of the ribosomal RNA (rrn) operons. The sequence is that of Transcription antitermination protein NusB from Stenotrophomonas maltophilia (strain R551-3).